Consider the following 468-residue polypeptide: UDP-N-acetylmuramate--L-alanine ligase (468 aa).

112–118 (GTHGKTT) lines the ATP pocket.

The protein belongs to the MurCDEF family.

The protein localises to the cytoplasm. It catalyses the reaction UDP-N-acetyl-alpha-D-muramate + L-alanine + ATP = UDP-N-acetyl-alpha-D-muramoyl-L-alanine + ADP + phosphate + H(+). It participates in cell wall biogenesis; peptidoglycan biosynthesis. In terms of biological role, cell wall formation. In Bordetella bronchiseptica (strain ATCC BAA-588 / NCTC 13252 / RB50) (Alcaligenes bronchisepticus), this protein is UDP-N-acetylmuramate--L-alanine ligase.